The primary structure comprises 78 residues: Large ribosomal subunit protein bL28 (78 aa).

The tract at residues 1-23 (MSRICQITGKKPLSGNKRSHSMN) is disordered.

This sequence belongs to the bacterial ribosomal protein bL28 family.

This chain is Large ribosomal subunit protein bL28, found in Wigglesworthia glossinidia brevipalpis.